A 526-amino-acid polypeptide reads, in one-letter code: Delayed-rectifier potassium channel regulatory subunit KCNS1 (526 aa).

The Cytoplasmic segment spans residues 1–217 (MLMLLVRGTH…LTMENPGYSL (217 aa)). Residues 218 to 239 (PSKLFSCVSISVVLASIAAMCI) traverse the membrane as a helical segment. At 240 to 270 (HSLPEYQAREAAAAVAAVAAGRSPEGVRDDP) the chain is on the extracellular side. The helical transmembrane segment at 271–293 (VLRRLEYFCIAWFSFEVSSRLLL) threads the bilayer. Topologically, residues 294–304 (APSTRNFFCHP) are cytoplasmic. A helical transmembrane segment spans residues 305 to 322 (LNLIDIVSVLPFYLTLLA). Topologically, residues 323-337 (GVALGDQGGKEFGHL) are extracellular. A helical; Voltage-sensor membrane pass occupies residues 338-358 (GKVVQVFRLMRIFRVLKLARH). The Cytoplasmic segment spans residues 359–373 (STGLRSLGATLKHSY). A helical membrane pass occupies residues 374-395 (REVGILLLYLAVGVSVFSGVAY). Residues 396 to 408 (TAEKEEDVGFNTI) are Extracellular-facing. Residues 409 to 420 (PACWWWGTVSMT) constitute an intramembrane region (helical). The short motif at 421-426 (TVGYGD) is the Selectivity filter element. The stretch at 421–428 (TVGYGDVV) is an intramembrane region. Over 429 to 435 (PVTVAGK) the chain is Extracellular. A helical transmembrane segment spans residues 436–464 (LAASGCILGGILVVALPITIIFNKFSHFY). The Cytoplasmic segment spans residues 465–526 (RRQKALEAAV…PSEPPHPQRY (62 aa)). The segment at 492–526 (VSEASLETSGETSQEGRSADLESQAPSEPPHPQRY) is disordered. Over residues 496-507 (SLETSGETSQEG) the composition is skewed to polar residues.

This sequence belongs to the potassium channel family. S (TC 1.A.1.2) subfamily. Kv9.1/KCNS1 sub-subfamily. As to quaternary structure, heterotetramer with KCNB1. Heterotetramer with KCNB2. Does not form homomultimers.

The protein resides in the cell membrane. Its function is as follows. Potassium channel regulatory subunit that modulate the delayed rectifier voltage-gated potassium channel activity of KCNB1 and KCNB2 by altering their kinetics, expression levels, and shifting the half-inactivation potential to more polarized values. While it does not form functional channels on its own, it can form functional heterotetrameric channels with KCNB1 and KCNB2. Each regulatory subunit has unique regulatory properties that can lead to extensive inhibition, significant changes in kinetics, and/or substantial shifts in the voltage dependencies of the inactivation process. The sequence is that of Delayed-rectifier potassium channel regulatory subunit KCNS1 from Gorilla gorilla gorilla (Western lowland gorilla).